The following is a 456-amino-acid chain: MVLESFSASLRETIRKITGSSYIDKETVKEISKDLQRILLKADVNVKTVLQVTKEMERRALEEKPPAGMAHQDYMVRIIYEELLKILGEPSNVKLKPQTIMLVGLYGNGKTTTAGKLARFFAKKGLNSGLIAADVHRYAAYDQLKQIASEVNAKFYGDQSEKDPVRLIKHGLEQLKDVAVKIIDTSGRDSMDAELFDEIRRIKEAVAPDEVLMIIDATMGQQAGPEAKAFNDAIGVTGIIITKMDGTAKGGGALSAVAEIHVPIYFIGTGEHMDDLEVFDPKKFLSRLLGLGDLESLFETVQEADITEEEAQESFEKLMTGKFNLKDMYDVWEKFSKPGLMKKLVDALPLARIPGSQKIDDSKIQSAEDKLRMYRIIMDSMTFEELENPEIINAKRITRIARGAGVREEDVRMLLKEFKAMKNNMKMMKGNRGLKKMLQANFRSGNFGLEDLGIKE.

GTP-binding positions include 104-111 (GLYGNGKT), 184-188 (DTSGR), and 242-245 (TKMD).

Belongs to the GTP-binding SRP family. SRP54 subfamily. As to quaternary structure, part of the signal recognition particle protein translocation system, which is composed of SRP and FtsY. Archaeal SRP consists of a 7S RNA molecule of 300 nucleotides and two protein subunits: SRP54 and SRP19.

It localises to the cytoplasm. It carries out the reaction GTP + H2O = GDP + phosphate + H(+). In terms of biological role, involved in targeting and insertion of nascent membrane proteins into the cytoplasmic membrane. Binds to the hydrophobic signal sequence of the ribosome-nascent chain (RNC) as it emerges from the ribosomes. The SRP-RNC complex is then targeted to the cytoplasmic membrane where it interacts with the SRP receptor FtsY. The polypeptide is Signal recognition particle 54 kDa protein (Thermoplasma acidophilum (strain ATCC 25905 / DSM 1728 / JCM 9062 / NBRC 15155 / AMRC-C165)).